Consider the following 349-residue polypeptide: Holliday junction branch migration complex subunit RuvB (349 aa).

Residues Met-1–Tyr-181 are large ATPase domain (RuvB-L). ATP contacts are provided by residues Leu-20, Arg-21, Gly-62, Lys-65, Thr-66, Thr-67, Glu-128 to Tyr-130, Arg-171, Tyr-181, and Arg-218. Thr-66 contributes to the Mg(2+) binding site. Residues Asn-182–Glu-252 form a small ATPAse domain (RuvB-S) region. Residues Asp-255 to Lys-349 form a head domain (RuvB-H) region. Residues Arg-310 and Arg-315 each coordinate DNA.

This sequence belongs to the RuvB family. As to quaternary structure, homohexamer. Forms an RuvA(8)-RuvB(12)-Holliday junction (HJ) complex. HJ DNA is sandwiched between 2 RuvA tetramers; dsDNA enters through RuvA and exits via RuvB. An RuvB hexamer assembles on each DNA strand where it exits the tetramer. Each RuvB hexamer is contacted by two RuvA subunits (via domain III) on 2 adjacent RuvB subunits; this complex drives branch migration. In the full resolvosome a probable DNA-RuvA(4)-RuvB(12)-RuvC(2) complex forms which resolves the HJ.

The protein localises to the cytoplasm. It catalyses the reaction ATP + H2O = ADP + phosphate + H(+). The RuvA-RuvB-RuvC complex processes Holliday junction (HJ) DNA during genetic recombination and DNA repair, while the RuvA-RuvB complex plays an important role in the rescue of blocked DNA replication forks via replication fork reversal (RFR). RuvA specifically binds to HJ cruciform DNA, conferring on it an open structure. The RuvB hexamer acts as an ATP-dependent pump, pulling dsDNA into and through the RuvAB complex. RuvB forms 2 homohexamers on either side of HJ DNA bound by 1 or 2 RuvA tetramers; 4 subunits per hexamer contact DNA at a time. Coordinated motions by a converter formed by DNA-disengaged RuvB subunits stimulates ATP hydrolysis and nucleotide exchange. Immobilization of the converter enables RuvB to convert the ATP-contained energy into a lever motion, pulling 2 nucleotides of DNA out of the RuvA tetramer per ATP hydrolyzed, thus driving DNA branch migration. The RuvB motors rotate together with the DNA substrate, which together with the progressing nucleotide cycle form the mechanistic basis for DNA recombination by continuous HJ branch migration. Branch migration allows RuvC to scan DNA until it finds its consensus sequence, where it cleaves and resolves cruciform DNA. The protein is Holliday junction branch migration complex subunit RuvB of Clostridium acetobutylicum (strain ATCC 824 / DSM 792 / JCM 1419 / IAM 19013 / LMG 5710 / NBRC 13948 / NRRL B-527 / VKM B-1787 / 2291 / W).